The chain runs to 828 residues: Molybdenum cofactor sulfurase (828 aa).

Position 239 is an N6-(pyridoxal phosphate)lysine (lysine 239). Cysteine 402 is an active-site residue. Residues 638–682 are disordered; that stretch reads TRYTRRSLHSRSSTAALRRQRPVEESSMPGSFPSDTPLSRTPEPP. Residues 652-825 enclose the MOSC domain; it reads AALRRQRPVE…VMVGDVVRPW (174 aa).

This sequence belongs to the class-V pyridoxal-phosphate-dependent aminotransferase family. MOCOS subfamily. Pyridoxal 5'-phosphate is required as a cofactor.

The catalysed reaction is Mo-molybdopterin + L-cysteine + AH2 = thio-Mo-molybdopterin + L-alanine + A + H2O. Its function is as follows. Sulfurates the molybdenum cofactor. Sulfation of molybdenum is essential for xanthine dehydrogenase (XDH) and aldehyde oxidase (ADO) enzymes in which molybdenum cofactor is liganded by 1 oxygen and 1 sulfur atom in active form. The protein is Molybdenum cofactor sulfurase of Aspergillus terreus (strain NIH 2624 / FGSC A1156).